A 135-amino-acid chain; its full sequence is Probable histone H2A.1 (135 aa).

This sequence belongs to the histone H2A family. As to quaternary structure, the nucleosome is a histone octamer containing two molecules each of H2A, H2B, H3 and H4 assembled in one H3-H4 heterotetramer and two H2A-H2B heterodimers. The octamer wraps approximately 147 bp of DNA.

It localises to the nucleus. The protein resides in the chromosome. Its function is as follows. Core component of nucleosome. Nucleosomes wrap and compact DNA into chromatin, limiting DNA accessibility to the cellular machineries which require DNA as a template. Histones thereby play a central role in transcription regulation, DNA repair, DNA replication and chromosomal stability. DNA accessibility is regulated via a complex set of post-translational modifications of histones, also called histone code, and nucleosome remodeling. The protein is Probable histone H2A.1 of Oryza sativa subsp. japonica (Rice).